Consider the following 447-residue polypeptide: Glutamyl-tRNA(Gln) amidotransferase subunit A (447 aa).

Residues Lys-51 and Ser-126 each act as charge relay system in the active site. Residue Ser-150 is the Acyl-ester intermediate of the active site.

Belongs to the amidase family. GatA subfamily. Heterotrimer of A, B and C subunits.

The catalysed reaction is L-glutamyl-tRNA(Gln) + L-glutamine + ATP + H2O = L-glutaminyl-tRNA(Gln) + L-glutamate + ADP + phosphate + H(+). Its function is as follows. Allows the formation of correctly charged Gln-tRNA(Gln) through the transamidation of misacylated Glu-tRNA(Gln) in organisms which lack glutaminyl-tRNA synthetase. The reaction takes place in the presence of glutamine and ATP through an activated gamma-phospho-Glu-tRNA(Gln). The protein is Glutamyl-tRNA(Gln) amidotransferase subunit A of Helicobacter hepaticus (strain ATCC 51449 / 3B1).